A 362-amino-acid chain; its full sequence is MNSRVFNFGAGPAMLPEEILKEAQEEFLNWRNTGMSILEIGHRTPEIISLLSTAEQSLRELLNIPKNYHVLFLGGAARTQFAMIPMNLLRPGDDAAYFITGIWSKMAYHEANLLKKAYYLSSEEKEGFVSIPDYQKWELKSNTAYVYYTPNETINGVRFPYVPKTGGVPLVADMTSCLLSEPININQYGLIFAGAQKNIANAGLTVVIIHEELLKNQPEPVIPTMLNYKNHAEHRSLYATPPVFNCYLASKMFEWIKTQGGIEGLFQRNCLKAAKLYQYLDSTDFYLTPVFKEARSIMNICFSLCYPDLEHKFLDMANERGLKALKGHRFTGGLRASLYNAMPMAGVDALIEFMSEFAKENG.

Residue R43 participates in L-glutamate binding. Residues 77–78 (AR), W103, T153, D173, and Q196 contribute to the pyridoxal 5'-phosphate site. Position 197 is an N6-(pyridoxal phosphate)lysine (K197).

Belongs to the class-V pyridoxal-phosphate-dependent aminotransferase family. SerC subfamily. As to quaternary structure, homodimer. Pyridoxal 5'-phosphate is required as a cofactor.

The protein localises to the cytoplasm. The enzyme catalyses O-phospho-L-serine + 2-oxoglutarate = 3-phosphooxypyruvate + L-glutamate. It carries out the reaction 4-(phosphooxy)-L-threonine + 2-oxoglutarate = (R)-3-hydroxy-2-oxo-4-phosphooxybutanoate + L-glutamate. Its pathway is amino-acid biosynthesis; L-serine biosynthesis; L-serine from 3-phospho-D-glycerate: step 2/3. It functions in the pathway cofactor biosynthesis; pyridoxine 5'-phosphate biosynthesis; pyridoxine 5'-phosphate from D-erythrose 4-phosphate: step 3/5. In terms of biological role, catalyzes the reversible conversion of 3-phosphohydroxypyruvate to phosphoserine and of 3-hydroxy-2-oxo-4-phosphonooxybutanoate to phosphohydroxythreonine. This Legionella pneumophila (strain Lens) protein is Phosphoserine aminotransferase.